The primary structure comprises 256 residues: Thiazole synthase (256 aa).

Lys95 functions as the Schiff-base intermediate with DXP in the catalytic mechanism. Residues Gly156, 182–183 (AG), and 204–205 (NT) each bind 1-deoxy-D-xylulose 5-phosphate.

This sequence belongs to the ThiG family. In terms of assembly, homotetramer. Forms heterodimers with either ThiH or ThiS.

Its subcellular location is the cytoplasm. The enzyme catalyses [ThiS sulfur-carrier protein]-C-terminal-Gly-aminoethanethioate + 2-iminoacetate + 1-deoxy-D-xylulose 5-phosphate = [ThiS sulfur-carrier protein]-C-terminal Gly-Gly + 2-[(2R,5Z)-2-carboxy-4-methylthiazol-5(2H)-ylidene]ethyl phosphate + 2 H2O + H(+). It participates in cofactor biosynthesis; thiamine diphosphate biosynthesis. Functionally, catalyzes the rearrangement of 1-deoxy-D-xylulose 5-phosphate (DXP) to produce the thiazole phosphate moiety of thiamine. Sulfur is provided by the thiocarboxylate moiety of the carrier protein ThiS. In vitro, sulfur can be provided by H(2)S. This Escherichia coli (strain 55989 / EAEC) protein is Thiazole synthase.